The primary structure comprises 475 residues: Probable 5'-adenylylsulfate reductase 1, chloroplastic (475 aa).

The N-terminal 63 residues, 1 to 63, are a transit peptide targeting the chloroplast; it reads MASATASISS…AAEPARQPVS (63 aa). Residues 72–327 are reductase domain; that stretch reads AAPVAEDAAA…KAKECGLHKG (256 aa). A Thioredoxin domain is found at 341–475; that stretch reads HKAGGANGNG…SLLAFVNSLR (135 aa). Active-site nucleophile residues include C393 and C396. Cysteines 393 and 396 form a disulfide.

It belongs to the APS reductase family. [4Fe-4S] cluster serves as cofactor.

Its subcellular location is the plastid. The protein resides in the chloroplast. It carries out the reaction glutathione disulfide + sulfite + AMP + 2 H(+) = adenosine 5'-phosphosulfate + 2 glutathione. Functionally, reduces sulfate for Cys biosynthesis. This Oryza sativa subsp. japonica (Rice) protein is Probable 5'-adenylylsulfate reductase 1, chloroplastic (APR1).